The sequence spans 196 residues: Chromophore lyase CpcT/CpeT (196 aa).

The protein belongs to the CpcT/CpeT biliprotein lyase family.

Functionally, covalently attaches a chromophore to Cys residue(s) of phycobiliproteins. This chain is Chromophore lyase CpcT/CpeT, found in Synechococcus sp. (strain WH8020).